The chain runs to 396 residues: Elongation factor Tu (396 aa).

The 196-residue stretch at 10–205 folds into the tr-type G domain; the sequence is KPHVNIGTIG…AVDESIPDPV (196 aa). Residues 19–26 form a G1 region; that stretch reads GHVDHGKT. 19-26 provides a ligand contact to GTP; that stretch reads GHVDHGKT. Position 26 (Thr-26) interacts with Mg(2+). Residues 62-66 are G2; that stretch reads GITIN. The tract at residues 83-86 is G3; the sequence is DAPG. GTP-binding positions include 83–87 and 138–141; these read DAPGH and NKAD. Positions 138–141 are G4; the sequence is NKAD. The interval 175-177 is G5; that stretch reads SGL.

It belongs to the TRAFAC class translation factor GTPase superfamily. Classic translation factor GTPase family. EF-Tu/EF-1A subfamily. In terms of assembly, monomer.

It is found in the cytoplasm. It catalyses the reaction GTP + H2O = GDP + phosphate + H(+). Functionally, GTP hydrolase that promotes the GTP-dependent binding of aminoacyl-tRNA to the A-site of ribosomes during protein biosynthesis. The sequence is that of Elongation factor Tu from Nocardia farcinica (strain IFM 10152).